We begin with the raw amino-acid sequence, 89 residues long: Small ribosomal subunit protein uS15 (89 aa).

Residues 1-23 form a disordered region; that stretch reads MTLNTEAKQKIINKHQTHGTDTG.

Belongs to the universal ribosomal protein uS15 family. As to quaternary structure, part of the 30S ribosomal subunit. Forms a bridge to the 50S subunit in the 70S ribosome, contacting the 23S rRNA.

In terms of biological role, one of the primary rRNA binding proteins, it binds directly to 16S rRNA where it helps nucleate assembly of the platform of the 30S subunit by binding and bridging several RNA helices of the 16S rRNA. Forms an intersubunit bridge (bridge B4) with the 23S rRNA of the 50S subunit in the ribosome. This is Small ribosomal subunit protein uS15 from Prochlorococcus marinus (strain SARG / CCMP1375 / SS120).